The primary structure comprises 415 residues: 3-oxoacyl-[acyl-carrier-protein] synthase 2 (415 aa).

The Ketosynthase family 3 (KS3) domain occupies 3–412 (KRRVVVTGMG…GTNGSLVFKK (410 aa)). Active-site for beta-ketoacyl synthase activity residues include Cys-164, His-304, and His-342.

It belongs to the thiolase-like superfamily. Beta-ketoacyl-ACP synthases family. In terms of assembly, homodimer.

The enzyme catalyses a fatty acyl-[ACP] + malonyl-[ACP] + H(+) = a 3-oxoacyl-[ACP] + holo-[ACP] + CO2. It carries out the reaction (9Z)-hexadecenoyl-[ACP] + malonyl-[ACP] + H(+) = 3-oxo-(11Z)-octadecenoyl-[ACP] + holo-[ACP] + CO2. Its pathway is lipid metabolism; fatty acid biosynthesis. Its function is as follows. Involved in the type II fatty acid elongation cycle. Catalyzes the elongation of a wide range of acyl-ACP by the addition of two carbons from malonyl-ACP to an acyl acceptor. Can efficiently catalyze the conversion of palmitoleoyl-ACP (cis-hexadec-9-enoyl-ACP) to cis-vaccenoyl-ACP (cis-octadec-11-enoyl-ACP), an essential step in the thermal regulation of fatty acid composition. The chain is 3-oxoacyl-[acyl-carrier-protein] synthase 2 (fabF) from Vibrio harveyi (Beneckea harveyi).